A 384-amino-acid polypeptide reads, in one-letter code: DNA replication and repair protein RecF (384 aa).

Residue 30–37 participates in ATP binding; that stretch reads GNNAQGKS.

The protein belongs to the RecF family.

The protein resides in the cytoplasm. In terms of biological role, the RecF protein is involved in DNA metabolism; it is required for DNA replication and normal SOS inducibility. RecF binds preferentially to single-stranded, linear DNA. It also seems to bind ATP. The chain is DNA replication and repair protein RecF from Gloeothece citriformis (strain PCC 7424) (Cyanothece sp. (strain PCC 7424)).